Reading from the N-terminus, the 231-residue chain is Orotidine 5'-phosphate decarboxylase (231 aa).

Substrate contacts are provided by residues D11, K33, 60-69 (DLKFHDIPNT), T119, R180, Q189, G209, and R210. The active-site Proton donor is K62.

This sequence belongs to the OMP decarboxylase family. Type 1 subfamily. As to quaternary structure, homodimer.

The catalysed reaction is orotidine 5'-phosphate + H(+) = UMP + CO2. Its pathway is pyrimidine metabolism; UMP biosynthesis via de novo pathway; UMP from orotate: step 2/2. Catalyzes the decarboxylation of orotidine 5'-monophosphate (OMP) to uridine 5'-monophosphate (UMP). This is Orotidine 5'-phosphate decarboxylase from Idiomarina loihiensis (strain ATCC BAA-735 / DSM 15497 / L2-TR).